A 499-amino-acid chain; its full sequence is Glutamyl-tRNA(Gln) amidotransferase subunit A, mitochondrial (499 aa).

Active-site charge relay system residues include Lys-61 and Ser-139. Catalysis depends on Ser-163, which acts as the Acyl-ester intermediate.

This sequence belongs to the amidase family. GatA subfamily. Subunit of the heterotrimeric GatCAB amidotransferase (AdT) complex, composed of A, B and C subunits.

It localises to the mitochondrion. The enzyme catalyses L-glutamyl-tRNA(Gln) + L-glutamine + ATP + H2O = L-glutaminyl-tRNA(Gln) + L-glutamate + ADP + phosphate + H(+). Allows the formation of correctly charged Gln-tRNA(Gln) through the transamidation of misacylated Glu-tRNA(Gln) in the mitochondria. The reaction takes place in the presence of glutamine and ATP through an activated gamma-phospho-Glu-tRNA(Gln). This is Glutamyl-tRNA(Gln) amidotransferase subunit A, mitochondrial from Coccidioides posadasii (strain C735) (Valley fever fungus).